A 634-amino-acid chain; its full sequence is Phosphatase and actin regulator 2 (634 aa).

4 disordered regions span residues 1-32 (MDNA…KRKG), 84-344 (LPDQ…PLED), 412-471 (PQLL…ALAS), and 485-508 (NRPS…ERQE). Asp2 is lipidated: N-myristoyl glycine. The segment covering 13–26 (IANSDGPTAGSQTP) has biased composition (polar residues). Ser16 is modified (phosphoserine). Phosphothreonine is present on Thr25. The stretch at 60 to 85 (AVLERKISTRQSREELIRRGVLKELP) is one RPEL 1 repeat. Basic and acidic residues-rich tracts occupy residues 108 to 120 (ESTR…KSEE) and 137 to 147 (EDKKENTENHS). Pro residues predominate over residues 153–162 (PALPPSAPPK). Low complexity-rich tracts occupy residues 231–247 (GSKA…SSRP) and 276–290 (TSHL…GTSD). Residues 291 to 304 (LKGEPAETRVESFK) are compositionally biased toward basic and acidic residues. Over residues 324–341 (VPPPPVAPAPSPLAPPLP) the composition is skewed to pro residues. A Phosphoserine modification is found at Ser423. The span at 452–464 (TDDEDEDEDEDGS) shows a compositional bias: acidic residues. RPEL repeat units lie at residues 477–502 (DTLA…QRTS), 515–540 (TKLV…KQKN), and 553–578 (RRLS…RFNE). A compositionally biased stretch (basic and acidic residues) spans 488–508 (SKKELEDKNILQRTSEEERQE). Phosphoserine is present on residues Ser522 and Ser560.

This sequence belongs to the phosphatase and actin regulator family. Binds PPP1CA and actin.

Its subcellular location is the membrane. This is Phosphatase and actin regulator 2 (PHACTR2) from Homo sapiens (Human).